The sequence spans 296 residues: (3R)-3-[(carboxymethyl)amino]fatty acid oxygenase/decarboxylase (296 aa).

Residues Y66, Y71, and G98 each contribute to the (3R)-3-[(carboxymethyl)amino]butanoate site. 3 residues coordinate (3R)-3-{[carboxy(hydroxy)methyl]amino}butanoate: Y66, Y71, and G98. 2 residues coordinate Fe(2+): H102 and D104. The (3R)-3-[(carboxymethyl)amino]butanoate site is built by Y105 and K163. Residues Y105 and K163 each coordinate (3R)-3-{[carboxy(hydroxy)methyl]amino}butanoate. Residue H265 participates in Fe(2+) binding. H269 is a 2-oxoglutarate binding site. R280 contributes to the (3R)-3-[(carboxymethyl)amino]butanoate binding site. Position 280 (R280) interacts with (3R)-3-{[carboxy(hydroxy)methyl]amino}butanoate.

This sequence belongs to the TfdA dioxygenase family. Fe(2+) serves as cofactor.

It catalyses the reaction a (3R)-3-[(carboxymethyl)amino]fatty acid + 2 2-oxoglutarate + 2 O2 = a (3R)-3-isocyanyl-fatty acid + 2 succinate + 3 CO2 + 2 H2O. The catalysed reaction is a (3R)-3-[(carboxymethyl)amino]fatty acid + 2-oxoglutarate + O2 = a (3R)-3-{[carboxy(hydroxy)methyl]amino}fatty acid + succinate + CO2. The enzyme catalyses a (3R)-3-{[carboxy(hydroxy)methyl]amino}fatty acid + 2-oxoglutarate + O2 = a (3R)-3-isocyanyl-fatty acid + succinate + 2 CO2 + 2 H2O. It carries out the reaction (3R)-3-[(carboxymethyl)amino]butanoate + 2 2-oxoglutarate + 2 O2 = (3R)-3-isocyanylbutanoate + 2 succinate + 3 CO2 + 2 H2O. It catalyses the reaction (3R)-3-[(carboxymethyl)amino]butanoate + 2-oxoglutarate + O2 = (3R)-3-{[carboxy(hydroxy)methyl]amino}butanoate + succinate + CO2. The catalysed reaction is (3R)-3-{[carboxy(hydroxy)methyl]amino}butanoate + 2-oxoglutarate + O2 = (3R)-3-isocyanylbutanoate + succinate + 2 CO2 + 2 H2O. Involved in the biosynthesis of a unique class of isonitrile lipopeptides (INLPs). Catalyzes the conversion of (3R)-3-[(carboxymethyl)amino]fatty acids such as (3R)-3-[(carboxymethyl)amino]butanoate (CABA) to (3R)-3-isocyanylbutanoate (INBA) through an oxidative decarboxylation mechanism, thereby generating the isonitrile group of INLPs. The sequence is that of (3R)-3-[(carboxymethyl)amino]fatty acid oxygenase/decarboxylase from Streptomyces coeruleorubidus.